Here is a 104-residue protein sequence, read N- to C-terminus: L-rhamnose mutarotase (104 aa).

Y18 is a substrate binding site. Catalysis depends on H22, which acts as the Proton donor. Residues Y41 and 76–77 (WW) each bind substrate.

Belongs to the rhamnose mutarotase family. As to quaternary structure, homodimer.

It is found in the cytoplasm. It carries out the reaction alpha-L-rhamnose = beta-L-rhamnose. It participates in carbohydrate metabolism; L-rhamnose metabolism. Its function is as follows. Involved in the anomeric conversion of L-rhamnose. The sequence is that of L-rhamnose mutarotase from Escherichia coli O8 (strain IAI1).